The chain runs to 52 residues: Inducible serine protease inhibitor 2 (52 aa).

A BPTI/Kunitz inhibitor domain is found at 5–52 (CTLPLETGICRAELHRFGYDTKLKECTQFVYGGCHHNENNFKKLEVCR). Disulfide bonds link C14–C38 and C30–C51.

Its function is as follows. Inhibits trypsin and the toxin protease PR2 of M.anisopliae. Does not inhibit chymotrypsin, subtilisin Carlsberg, proteinase K, porcine pancreatic elastase and the toxin protease PR1 of M.anisopliae. This chain is Inducible serine protease inhibitor 2, found in Galleria mellonella (Greater wax moth).